We begin with the raw amino-acid sequence, 594 residues long: MAAPVKGNRKQSTEGDALDPPASPKPAGKQNGIQNPISLEDSPEAGGEREEEQEREEEQAFLVSLYKFMKERHTPIERVPHLGFKQINLWKIYKAVEKLGAYELVTGRRLWKNVYDELGGSPGSTSAATCTRRHYERLVLPYVRHLKGEDDKPLPTSKPRKQYKMAKENRGDDGATERPKKAKEERRMDQMMPGKTKADAADPAPLPSQEPPRNSTEQQGLASGSSVSFVGASGCPEAYKRLLSSFYCKGTHGIMSPLAKKKLLAQVSKVEALQCQEEGCRHGAEPQASPAVHLPESPQSPKGLTENSRHRLTPQEGLQAPGGSLREEAQAGPCPAAPIFKGCFYTHPTEVLKPVSQHPRDFFSRLKDGVLLGPPGKEGLSVKEPQLVWGGDANRPSAFHKGGSRKGILYPKPKACWVSPMAKVPAESPTLPPTFPSSPGLGSKRSLEEEGAAHSGKRLRAVSPFLKEADAKKCGAKPAGSGLVSCLLGPALGPVPPEAYRGTMLHCPLNFTGTPGPLKGQAALPFSPLVIPAFPAHFLATAGPSPMAAGLMHFPPTSFDSALRHRLCPASSAWHAPPVTTYAAPHFFHLNTKL.

A disordered region spans residues 1-56 (MAAPVKGNRKQSTEGDALDPPASPKPAGKQNGIQNPISLEDSPEAGGEREEEQERE). An interaction with SOX9 region spans residues 1–300 (MAAPVKGNRK…AVHLPESPQS (300 aa)). At Ser-23 the chain carries Phosphoserine. One can recognise an ARID domain in the interval 55-147 (REEEQAFLVS…LVLPYVRHLK (93 aa)). Residues Lys-85 and Lys-94 each participate in a glycyl lysine isopeptide (Lys-Gly) (interchain with G-Cter in ubiquitin) cross-link. A disordered region spans residues 146 to 223 (LKGEDDKPLP…NSTEQQGLAS (78 aa)). The segment covering 165 to 189 (MAKENRGDDGATERPKKAKEERRMD) has biased composition (basic and acidic residues). 2 positions are modified to phosphoserine: Ser-256 and Ser-289. Disordered stretches follow at residues 281-331 (RHGA…EAQA) and 426-454 (AESPTLPPTFPSSPGLGSKRSLEEEGAAH). Polar residues predominate over residues 297–306 (SPQSPKGLTE). 2 positions are modified to phosphoserine: Ser-438 and Ser-463.

As to quaternary structure, interacts with SOX9. Interacts with ESR1. Interacts with RORC. In terms of processing, phosphorylated by MAPK14 on serine residues involving a TLR4 signaling pathway upon lipopolysaccharide (LPS) stimulation leading to its ubiquitination and proteasomal degradation. Ubiquitinated leading to proteasomal degradation; involving WWP1 linked to MAPK14-mediated phosphorylation upon LPS stimulation.

It is found in the nucleus. DNA-binding protein that may regulate transcription and act as a repressor by binding to AT-rich stretches in the promoter region of target genes. May positively regulate chondrocyte-specific transcription such as of COL2A1 in collaboration with SOX9 and positively regulate histone H3 acetylation at chondrocyte-specific genes. May stimulate early-stage chondrocyte differentiation and inhibit later stage differention. Can repress ESR1-mediated transcriptional activation; proposed to act as corepressor for selective nuclear hormone receptors. As an RNA-binding protein, involved in the regulation of inflammatory response by stabilizing selective inflammation-related mRNAs, such as STAT3 and TBX21. Also stabilizes IL6 mRNA. Binds to stem loop structures located in the 3'UTRs of IL6, STAT3 and TBX21 mRNAs; at least for STAT3 prevents binding of ZC3H12A to the mRNA stem loop structure thus inhibiting its degradation activity. Contributes to elevated IL6 levels possibly implicated in autoimmunity processes. IL6-dependent stabilization of STAT3 mRNA may promote differentiation of naive CD4+ T-cells into T-helper Th17 cells. In CD4+ T-cells may also inhibit RORC-induced Th17 cell differentiation independently of IL6 signaling. Stabilization of TBX21 mRNA contributes to elevated interferon-gamma secretion in Th1 cells possibly implicated in the establishment of septic shock. Stabilizes TNFRSF4/OX40 mRNA by binding to the conserved stem loop structure in its 3'UTR; thereby competing with the mRNA-destabilizing functions of RC3H1 and endoribonuclease ZC3H12A. The polypeptide is AT-rich interactive domain-containing protein 5A (ARID5A) (Homo sapiens (Human)).